Here is a 312-residue protein sequence, read N- to C-terminus: MGNTRKKVSVIGAGFTGATTAFLIAQKELADVVLVDIPQLENPTKGKALDMLEASPVQGFDAKITGTSNYEDTAGSDIVVITAGIARKPGMSRDDLVSTNEKIMRSVTQEIVKYSPDSIIVVLTNPVDAMTYAVYKESGFPKERVIGQSGVLDTARFRTFVAEELNLSVKDVTGFVLGGHGDDMVPLVRYSYAGGIPLETLIPKERIDAIVERTRKGGGEIVNLLGNGSAYYAPAASLTEMVEAILKDQRRVLPTIAYLEGEYGYEGIYLGVPTIVGGNGLEQIIELELTDYERAQLNKSVESVKNVMKVLS.

NAD(+) is bound by residues 12–17 (GAGFTG) and Asp-36. Substrate contacts are provided by Arg-87 and Arg-93. NAD(+)-binding positions include Asn-100 and 123-125 (LTN). Asn-125 is a binding site for substrate. Phosphoserine is present on Ser-149. Arg-156 contributes to the substrate binding site. His-180 serves as the catalytic Proton acceptor.

It belongs to the LDH/MDH superfamily. MDH type 3 family.

It catalyses the reaction (S)-malate + NAD(+) = oxaloacetate + NADH + H(+). Its function is as follows. Catalyzes the reversible oxidation of malate to oxaloacetate. This chain is Malate dehydrogenase (mdh), found in Bacillus subtilis (strain 168).